A 237-amino-acid polypeptide reads, in one-letter code: V-type proton ATPase subunit E3 (237 aa).

Methionine 1 is subject to N-acetylmethionine. Residues 9-67 adopt a coiled-coil conformation; that stretch reads QIQQMVRFIRQEAEEKANEISISSEEEFNIEKLQLVEAEKKKIRQEYEKKEKQVDVRKK.

It belongs to the V-ATPase E subunit family. V-ATPase is a heteromultimeric enzyme composed of a peripheral catalytic V1 complex (components A to H) attached to an integral membrane V0 proton pore complex (components: a, c, c'', d and e).

It is found in the vacuole membrane. Its function is as follows. Subunit of the peripheral V1 complex of vacuolar ATPase essential for assembly or catalytic function. V-ATPase is responsible for acidifying a variety of intracellular compartments in eukaryotic cells. In Arabidopsis thaliana (Mouse-ear cress), this protein is V-type proton ATPase subunit E3 (VHA-E3).